The chain runs to 260 residues: MSLRIKIDKLRQLVTYFSEFSEEVSINIDVKSNVLYIFATLGGSINIWTIVPLNSNVFYNGVENTVFNLPVLKVKNCLCSFHNDAVVSITADHDNNTVTLSSHYTVSIDCNNEQIPHSTGTSISLGIDQKKSYIFNFHKYEEKCCGRTVFHLDMLLGFIKCISQYQYLNICFDDKKLLLKTPGTRDTFVRSYSMTEWSPTLQNYSFKIAIFSLNKLRGFKKRVLVFESKIVMDTEGNILGLLFRDRIGTYKVNVFMAFQD.

It belongs to the chordopoxvirinae VLTF-1 family. Interacts with the late transcription factors VLTF-2 and VLTF-3. Interacts with the late transcription elongation factor H5/VLTF-4. Interacts with itself.

Its function is as follows. Associates with RNA polymerase to initiate transcription from late gene promoters. In Vertebrata (FPV), this protein is Late transcription factor 1 (VLTF1).